The following is a 180-amino-acid chain: Protein GrpE (180 aa).

It belongs to the GrpE family. In terms of assembly, homodimer.

It is found in the cytoplasm. Functionally, participates actively in the response to hyperosmotic and heat shock by preventing the aggregation of stress-denatured proteins, in association with DnaK and GrpE. It is the nucleotide exchange factor for DnaK and may function as a thermosensor. Unfolded proteins bind initially to DnaJ; upon interaction with the DnaJ-bound protein, DnaK hydrolyzes its bound ATP, resulting in the formation of a stable complex. GrpE releases ADP from DnaK; ATP binding to DnaK triggers the release of the substrate protein, thus completing the reaction cycle. Several rounds of ATP-dependent interactions between DnaJ, DnaK and GrpE are required for fully efficient folding. The sequence is that of Protein GrpE from Picrophilus torridus (strain ATCC 700027 / DSM 9790 / JCM 10055 / NBRC 100828 / KAW 2/3).